The sequence spans 325 residues: Tagatose 1,6-diphosphate aldolase 1 (325 aa).

It belongs to the aldolase LacD family.

The catalysed reaction is D-tagatofuranose 1,6-bisphosphate = D-glyceraldehyde 3-phosphate + dihydroxyacetone phosphate. Its pathway is carbohydrate metabolism; D-tagatose 6-phosphate degradation; D-glyceraldehyde 3-phosphate and glycerone phosphate from D-tagatose 6-phosphate: step 2/2. This chain is Tagatose 1,6-diphosphate aldolase 1, found in Streptococcus agalactiae serotype III (strain NEM316).